The primary structure comprises 120 residues: Large ribosomal subunit protein uL22 (120 aa).

Belongs to the universal ribosomal protein uL22 family. As to quaternary structure, part of the 50S ribosomal subunit.

In terms of biological role, this protein binds specifically to 23S rRNA; its binding is stimulated by other ribosomal proteins, e.g. L4, L17, and L20. It is important during the early stages of 50S assembly. It makes multiple contacts with different domains of the 23S rRNA in the assembled 50S subunit and ribosome. Its function is as follows. The globular domain of the protein is located near the polypeptide exit tunnel on the outside of the subunit, while an extended beta-hairpin is found that lines the wall of the exit tunnel in the center of the 70S ribosome. In Rippkaea orientalis (strain PCC 8801 / RF-1) (Cyanothece sp. (strain PCC 8801)), this protein is Large ribosomal subunit protein uL22.